Consider the following 301-residue polypeptide: MLRLSAPGQLDDDLCLLGDVQVPVFLLRLGEASWALVEGGISRDAELVWADLCRWVADPSQVHYWLITHKHYDHCGLLPYLCPRLPNVQVLASERTCQAWKSESAVRVVERLNRQLLRAEQRLPEACAWDALPVRAVADGEWLELGPRHRLQVIEAHGHSDDHVVFYDVRRRRLFCGDALGEFDEAEGVWRPLVFDDMEAYLESLERLQRLPTLLQLIPGHGGLLRGRLAADGAESAYTECLRLCRRLLWRQSMGESLDELSEELHRAWGGQSVDFLPGELHLGSMRRMLEILSRQALPLD.

Positions 69, 71, 73, 74, 159, 178, and 221 each coordinate Fe cation.

This sequence belongs to the metallo-beta-lactamase superfamily.

It carries out the reaction (2-aminobenzoyl)acetyl-CoA + H2O = (2-aminobenzoyl)acetate + CoA + H(+). Thioesterase activity, but not pyocyanine production, is inhibited by 2-(pyridin-3-yl)benzoic acid, 2-(1H-pyrrol-1-yl)benzoic acid and 3-methylthiophene-2-carboxylic acid. Compounds bind to the active center. Required for the biosynthesis of the quorum-sensing signaling molecules 2-heptyl-4(1H)-quinolone (HHQ) and 2-heptyl-3-hydroxy-4(1H)-quinolone (Pseudomonas quinolone signal or PQS), which are important for biofilm formation and virulence. Catalyzes the hydrolysis of the intermediate 2-aminobenzoylacetyl-CoA (2-ABA-CoA) to form 2-aminobenzoylacetate (2-ABA), the precursor of HHQ. In vitro, can also hydrolyze other substrates such as S-ethyl-acetothioacetate and acetoacetyl-CoA, but is inactive against anthraniloyl-CoA, malonyl-CoA and octanoyl-CoA. Beyond its thioesterase function, is involved in the regulation of diverse genes coding for key virulence determinants and biofilm development. This chain is 2-aminobenzoylacetyl-CoA thioesterase, found in Pseudomonas aeruginosa (strain ATCC 15692 / DSM 22644 / CIP 104116 / JCM 14847 / LMG 12228 / 1C / PRS 101 / PAO1).